The sequence spans 147 residues: Phage-like element PBSX protein XkdM (147 aa).

This sequence to B.subtilis YqbM.

In Bacillus subtilis (strain 168), this protein is Phage-like element PBSX protein XkdM (xkdM).